Reading from the N-terminus, the 270-residue chain is Fibroblast growth factor 5 (270 aa).

A signal peptide spans 1-20; it reads MSLSFLLLLFLSHLILSAWA. A disordered region spans residues 25–86; that stretch reads RLAPKGQPGP…EQSSFQWSPS (62 aa). Over residues 41–69 the composition is skewed to low complexity; sequence PGGASSRRSSSSTATSSSSPASSSSAASR. Polar residues predominate over residues 76–86; it reads LEQSSFQWSPS. An N-linked (GlcNAc...) asparagine glycan is attached at N112. The interval 237–257 is disordered; sequence EKKKPPNPVKPKVPLSAPRRS.

Belongs to the heparin-binding growth factors family. As to quaternary structure, interacts with FGFR1 and FGFR2. Affinity between fibroblast growth factors (FGFs) and their receptors is increased by heparan sulfate glycosaminoglycans that function as coreceptors.

Its subcellular location is the secreted. Its function is as follows. Plays an important role in the regulation of cell proliferation and cell differentiation. Required for normal regulation of the hair growth cycle. Functions as an inhibitor of hair elongation by promoting progression from anagen, the growth phase of the hair follicle, into catagen the apoptosis-induced regression phase. The protein is Fibroblast growth factor 5 (FGF5) of Bos taurus (Bovine).